The following is a 148-amino-acid chain: MASKLYYAVAPLVLVLLLLAPLSSARLAAAAAADDDGQWPAGGGRGRKVGGRTDVEDVEGNREVQELGLFCVVEHNRRGGSATRGRGLVFSRVVAAQTQVVSGIKYYLRIAAQEADDELVFDAVVVVKAWVPSREMVSFVPAAELPGY.

The first 25 residues, 1–25 (MASKLYYAVAPLVLVLLLLAPLSSA), serve as a signal peptide directing secretion. The Secondary area of contact motif lies at 99-103 (QVVSG).

This sequence belongs to the cystatin family. Phytocystatin subfamily.

The protein resides in the secreted. Its function is as follows. Specific inhibitor of cysteine proteinases. Probably involved in the regulation of endogenous processes and in defense against pests and pathogens. The sequence is that of Cysteine proteinase inhibitor 5 from Oryza sativa subsp. japonica (Rice).